We begin with the raw amino-acid sequence, 441 residues long: MPAMTPAFRRADLTGFLRTYGAALILLLAAMLAWQPAQAQLRVDISGTGATQYPVAIADFAVDDTHGRALAEVIRADLTRTGQFRLINAAGSGLNVDSQVAHDDWRAKGADFLAYGSITRGPDGRYDVRYRLADTVKKGQLDGVAFSGTEQELRRVAHQIADRIYEKITGVRGVFSTRIAYVLKRGSTYELQVADADGQNPQVALRSREPIISPSWSPDGSRLAYVSFESGKPVVYVHTLATSARIPVANFKGNNSAPAWSPDGSQLAVALTRDGLSQIYIVSAGGGSNMRRITRSPGIDTEPNFTPDGRSIIFTSDRSGGPQIYQTGLDGGDARRLTFNGGYNISPRISPDGSTLLYVARRDGAFRIASLNLSSGSETLLTDGRDDQSPSFAPNGMQVLYAAIQNGRSVLAGVSSDGRVRQTLSVLNGEIREPTWGPFTR.

Residues 1–39 (MPAMTPAFRRADLTGFLRTYGAALILLLAAMLAWQPAQA) form the signal peptide.

Belongs to the TolB family. As to quaternary structure, the Tol-Pal system is composed of five core proteins: the inner membrane proteins TolA, TolQ and TolR, the periplasmic protein TolB and the outer membrane protein Pal. They form a network linking the inner and outer membranes and the peptidoglycan layer.

The protein localises to the periplasm. Functionally, part of the Tol-Pal system, which plays a role in outer membrane invagination during cell division and is important for maintaining outer membrane integrity. This is Tol-Pal system protein TolB from Bordetella bronchiseptica (strain ATCC BAA-588 / NCTC 13252 / RB50) (Alcaligenes bronchisepticus).